The sequence spans 312 residues: DNA-directed RNA polymerase subunit alpha (312 aa).

The interval 1–226 (MIEFEKPRIE…EHLDIFVNLT (226 aa)) is alpha N-terminal domain (alpha-NTD). An alpha C-terminal domain (alpha-CTD) region spans residues 243–312 (KEKMLEMTIE…DLGLGLRKDD (70 aa)).

The protein belongs to the RNA polymerase alpha chain family. In terms of assembly, homodimer. The RNAP catalytic core consists of 2 alpha, 1 beta, 1 beta' and 1 omega subunit. When a sigma factor is associated with the core the holoenzyme is formed, which can initiate transcription.

It carries out the reaction RNA(n) + a ribonucleoside 5'-triphosphate = RNA(n+1) + diphosphate. DNA-dependent RNA polymerase catalyzes the transcription of DNA into RNA using the four ribonucleoside triphosphates as substrates. This is DNA-directed RNA polymerase subunit alpha from Enterococcus faecalis (strain ATCC 700802 / V583).